Consider the following 449-residue polypeptide: MAKKVFVKTFGCQMNEYDSDKMVDVLNAAQGYEPTQDVEEADLILFNTCSVREKAQEKVFSDLGRIKHLKARGVKIGVGGCVASQEGDEIIKRAPYVDVVFGPQTLHRLPELLAQREALARPQVDISFPEIEKFDHLPPARVEGASAFVSIMEGCSKYCSYCVVPYTRGEEVSRPFDDVLVEVAGLADQGVKEVTLLGQNVNAYLGKMGGTAEVADFALLLEYVADITGIERIRFTTSHPNEFTQRLIDAYARIPKLVSHLHLPVQHGSDRILMAMKRGYTAMEYKSTIRKLRAIRPDLAMSSDFIVGFPGETEDDFGKMMKLIDDIHFDNSFSFIFSPRPGTPAASLHDDTPHEVKLRRLQELQAVINANIKSISESRVGTVQRILVEGASKRDGSELMGRTECNRVVNFAGHPRLVGQMVDVTITEAKAYTLRGEVVTADHGALAAH.

The region spanning 3–118 is the MTTase N-terminal domain; that stretch reads KKVFVKTFGC…LPELLAQREA (116 aa). Positions 12, 49, 81, 155, 159, and 162 each coordinate [4Fe-4S] cluster. One can recognise a Radical SAM core domain in the interval 141–376; the sequence is RVEGASAFVS…VINANIKSIS (236 aa). One can recognise a TRAM domain in the interval 377–440; that stretch reads ESRVGTVQRI…AYTLRGEVVT (64 aa).

Belongs to the methylthiotransferase family. MiaB subfamily. Monomer. The cofactor is [4Fe-4S] cluster.

It is found in the cytoplasm. It carries out the reaction N(6)-dimethylallyladenosine(37) in tRNA + (sulfur carrier)-SH + AH2 + 2 S-adenosyl-L-methionine = 2-methylsulfanyl-N(6)-dimethylallyladenosine(37) in tRNA + (sulfur carrier)-H + 5'-deoxyadenosine + L-methionine + A + S-adenosyl-L-homocysteine + 2 H(+). Its function is as follows. Catalyzes the methylthiolation of N6-(dimethylallyl)adenosine (i(6)A), leading to the formation of 2-methylthio-N6-(dimethylallyl)adenosine (ms(2)i(6)A) at position 37 in tRNAs that read codons beginning with uridine. In Paracidovorax citrulli (strain AAC00-1) (Acidovorax citrulli), this protein is tRNA-2-methylthio-N(6)-dimethylallyladenosine synthase.